We begin with the raw amino-acid sequence, 1248 residues long: Apoptotic protease-activating factor 1 (1248 aa).

Positions 1 to 90 (MDAKARNCLL…KDLAALLHDG (90 aa)) constitute a CARD domain. Residues 104 to 415 (SGITSYVRTV…METEEVEDIL (312 aa)) form the NB-ARC domain. Residues 154 to 161 (GMAGCGKS) and arginine 265 contribute to the ATP site. The WD 1-1 repeat unit spans residues 613–652 (PHTDAVYHACFSEDGQRIASCGADKTLQVFKAETGEKLLE). A WD 1-2 repeat occupies 655-694 (AHEDEVLCCAFSTDDRFIATCSVDKKVKIWNSMTGELVHT). The stretch at 697-738 (EHSEQVNCCHFTNSSHHLLLATGSSDCFLKLWDLNQKECRNT) is one WD 1-3 repeat. Residues 741-780 (GHTNSVNHCRFSPDDKLLASCSADGTLKLWDATSANERKS) form a WD 1-4 repeat. Residues 796 to 836 (DMEVIVKCCSWSADGARIMVAAKNKIFLFDIHTSGLLGEIH) form a WD 1-5 repeat. One copy of the WD 1-6 repeat lies at 838–877 (GHHSTIQYCDFSPQNHLAVVALSQYCVELWNTDSRSKVAD). The WD 1-7 repeat unit spans residues 880–910 (GHLSWVHGVMFSPDGSSFLTSSDDQTIRLWE). The interval 910–921 (ETKKVCKNSAVM) is interpropeller linker. The stretch at 922–958 (LKQEVDVVFQENEVMVLAVDHIRRLQLINGRTGQIDY) is one WD 2-1 repeat. One copy of the WD 2-2 repeat lies at 959–998 (LTEAQVSCCCLSPHLQYIAFGDENGAIEILELVNNRIFQS). A WD 2-3 repeat occupies 1001–1040 (QHKKTVWHIQFTADEKTLISSSDDAEIQVWNWQLDKCIFL). Residues 1042 to 1080 (GHQETVKDFRLLKNSRLLSWSFDGTVKVWNIITGNKEKD) form a WD 2-4 repeat. Residues 1083–1122 (CHQGTVLSCDISHDATKFSSTSADKTAKIWSFDLLLPLHE) form a WD 2-5 repeat. A WD 2-6 repeat occupies 1125 to 1164 (GHNGCVRCSAFSVDSTLLATGDDNGEIRIWNVSNGELLHL). One copy of the WD 2-7 repeat lies at 1175-1212 (THGGWVTDLCFSPDGKMLISAGGYIKWWNVVTGESSQT). Residues 1213–1248 (FYTNGTNLKKIHVSPDFKTYVTVDNLGILYILQTLE) form a WD 2-8 repeat.

As to quaternary structure, monomer. Oligomerizes to a heptameric ring, known as the apoptosome, upon binding of cytochrome c and dATP. Oligomeric Apaf-1 and pro-caspase-9 bind to each other via their respective NH2-terminal CARD domains and consecutively mature caspase-9 is released from the complex. Pro-caspase-3 is recruited into the Apaf-1-pro-caspase-9 complex via interaction with pro-caspase-9. Interacts with APIP. Interacts (via CARD and NACHT domains) with NAIP/BIRC1 (via NACHT domain). Interacts with CIAO2A. In terms of tissue distribution, ubiquitous. Highest levels of expression in adult spleen and peripheral blood leukocytes, and in fetal brain, kidney and lung. Isoform 1 is expressed in heart, kidney and liver.

Its subcellular location is the cytoplasm. Oligomeric Apaf-1 mediates the cytochrome c-dependent autocatalytic activation of pro-caspase-9 (Apaf-3), leading to the activation of caspase-3 and apoptosis. This activation requires ATP. Isoform 6 is less effective in inducing apoptosis. This is Apoptotic protease-activating factor 1 from Homo sapiens (Human).